A 355-amino-acid polypeptide reads, in one-letter code: Peptide chain release factor 1 (355 aa).

Q230 is subject to N5-methylglutamine.

The protein belongs to the prokaryotic/mitochondrial release factor family. Post-translationally, methylated by PrmC. Methylation increases the termination efficiency of RF1.

The protein localises to the cytoplasm. Its function is as follows. Peptide chain release factor 1 directs the termination of translation in response to the peptide chain termination codons UAG and UAA. In Geobacter metallireducens (strain ATCC 53774 / DSM 7210 / GS-15), this protein is Peptide chain release factor 1.